Here is a 72-residue protein sequence, read N- to C-terminus: UPF0150 protein ssl0738 (72 aa).

Belongs to the UPF0150 family.

The protein is UPF0150 protein ssl0738 of Synechocystis sp. (strain ATCC 27184 / PCC 6803 / Kazusa).